Reading from the N-terminus, the 256-residue chain is Coiled-coil domain-containing protein 90B, mitochondrial (256 aa).

The N-terminal 42 residues, methionine 1–serine 42, are a transit peptide targeting the mitochondrion. Positions leucine 129–lysine 167 form a coiled coil. A helical membrane pass occupies residues threonine 231 to tryptophan 253.

The protein belongs to the CCDC90 family. As to quaternary structure, interacts with MCU.

The protein resides in the mitochondrion membrane. The chain is Coiled-coil domain-containing protein 90B, mitochondrial (Ccdc90b) from Mus musculus (Mouse).